A 155-amino-acid chain; its full sequence is Small ribosomal subunit protein uS7cz/uS7cy (155 aa).

This sequence belongs to the universal ribosomal protein uS7 family. In terms of assembly, part of the 30S ribosomal subunit.

Its subcellular location is the plastid. It localises to the chloroplast. In terms of biological role, one of the primary rRNA binding proteins, it binds directly to 16S rRNA where it nucleates assembly of the head domain of the 30S subunit. This Amborella trichopoda protein is Small ribosomal subunit protein uS7cz/uS7cy (rps7-A).